Here is a 690-residue protein sequence, read N- to C-terminus: Elongation factor G (690 aa).

Positions 8 to 283 (EDYRNFGIMA…AVVDYLPSPL (276 aa)) constitute a tr-type G domain. GTP is bound by residues 17-24 (AHIDAGKT), 81-85 (DTPGH), and 135-138 (NKMD).

Belongs to the TRAFAC class translation factor GTPase superfamily. Classic translation factor GTPase family. EF-G/EF-2 subfamily.

Its subcellular location is the cytoplasm. Functionally, catalyzes the GTP-dependent ribosomal translocation step during translation elongation. During this step, the ribosome changes from the pre-translocational (PRE) to the post-translocational (POST) state as the newly formed A-site-bound peptidyl-tRNA and P-site-bound deacylated tRNA move to the P and E sites, respectively. Catalyzes the coordinated movement of the two tRNA molecules, the mRNA and conformational changes in the ribosome. The chain is Elongation factor G from Rhodopseudomonas palustris (strain ATCC BAA-98 / CGA009).